A 332-amino-acid polypeptide reads, in one-letter code: Adenosine receptor A2b (332 aa).

Over 1–8 (MQLETQDA) the chain is Extracellular. A helical membrane pass occupies residues 9-33 (LYVALELAIAALSVAGNVLVCAAVG). Over 34-43 (TSSALQTPTN) the chain is Cytoplasmic. A helical transmembrane segment spans residues 44-67 (YFLVSLAAADVAVGLFAIPFAITI). The Extracellular portion of the chain corresponds to 68–78 (SLGFCTDFHSC). Cysteines 78 and 170 form a disulfide. The chain crosses the membrane as a helical span at residues 79 to 101 (LFLACFVLVLTQSSIFSLLAVAV). The Cytoplasmic portion of the chain corresponds to 102–121 (DRYLAIRVPLRYKSLVTGTR). The chain crosses the membrane as a helical span at residues 122–144 (ARGVIAVLWVLAFGIGLTPFLGW). Residues 145–177 (NSKDSATNCTEPWDGTTNESCCLVKCLFENVVP) lie on the Extracellular side of the membrane. N-linked (GlcNAc...) asparagine glycosylation is found at Asn-152 and Asn-162. Glu-173 is an adenosine binding site. The helical transmembrane segment at 178 to 202 (MSYMVYFNFFGCVLPPLLIMLVIYI) threads the bilayer. Residues 203–234 (KIFMVACKQLQRTELVDHSRTVIQREIHAAKS) are Cytoplasmic-facing. A helical membrane pass occupies residues 235 to 258 (LAMIVGIFALCWLPVHAINCVTLF). Asn-253 provides a ligand contact to adenosine. Topologically, residues 259-266 (QPARAKDK) are extracellular. A helical membrane pass occupies residues 267-290 (PKWAMNMAILLSHASSVVNPIVYA). Residues Ser-278 and His-279 each contribute to the adenosine site. Residues 291–332 (YRNRDFRYTFHKIISRYVLCQTDVLKSGNGQAGTQSALDVGL) are Cytoplasmic-facing. Cys-310 carries the S-palmitoyl cysteine lipid modification.

This sequence belongs to the G-protein coupled receptor 1 family.

The protein localises to the cell membrane. In terms of biological role, receptor for adenosine. The activity of this receptor is mediated by G proteins which activate adenylyl cyclase. The chain is Adenosine receptor A2b (ADORA2B) from Canis lupus familiaris (Dog).